We begin with the raw amino-acid sequence, 589 residues long: Carbonic anhydrase (589 aa).

Alpha-carbonic anhydrase domains are found at residues His-59–Lys-316 and Asp-321–Asn-585. Thr-258–Thr-259 contributes to the substrate binding site. The interval Met-390–Ala-589 is catalytic. His-420, His-422, and His-440 together coordinate Zn(2+).

This sequence belongs to the alpha-carbonic anhydrase family. Requires Zn(2+) as cofactor.

It catalyses the reaction hydrogencarbonate + H(+) = CO2 + H2O. In terms of biological role, reversible hydration of carbon dioxide. This Dunaliella salina (Green alga) protein is Carbonic anhydrase (DCA).